The following is a 508-amino-acid chain: Protein adenylyltransferase Fic (508 aa).

The chain crosses the membrane as a helical span at residues 48–70; that stretch reads FYRFALFFIAGSFAAFSFHALTS. TPR repeat units lie at residues 132 to 165 and 166 to 200; these read ALGA…APKH and PEVL…CPSN. An Inhibitory (S/T)XXXE(G/N) motif motif is present at residues 257 to 262; sequence SVGIEG. Residues Glu261 and 342–345 contribute to the ATP site; that span reads VGGH. Residues 311-446 enclose the Fido domain; that stretch reads ITIKDILELH…IRPFVRFIAD (136 aa). Residue His389 is part of the active site. Residues 393-400, 425-426, and Asn433 each bind ATP; these read DGNGRTSR and YY.

It belongs to the fic family. In terms of assembly, homodimer.

Its subcellular location is the membrane. The catalysed reaction is L-tyrosyl-[protein] + ATP = O-(5'-adenylyl)-L-tyrosyl-[protein] + diphosphate. It catalyses the reaction L-threonyl-[protein] + ATP = 3-O-(5'-adenylyl)-L-threonyl-[protein] + diphosphate. The enzyme catalyses 3-O-(5'-adenylyl)-L-threonyl-[protein] + H2O = L-threonyl-[protein] + AMP + H(+). Its activity is regulated as follows. The side chain of Glu-261 determines which of the two opposing activities (AMPylase or de-AMPylase) will take place. In response to endoplasmic reticulum stress, mediates de-AMPylase activity. Adenylyltransferase activity is inhibited by the inhibitory helix present at the N-terminus: Glu-261 binds ATP and competes with ATP-binding at Arg-400, thereby preventing adenylyltransferase activity. In unstressed cells, disengagement of Glu-261 promotes adenylyltransferase activity. Activation dissociates ATP-binding from Glu-261, allowing ordered binding of the entire ATP moiety with the alpha-phosphate in an orientation that is productive for accepting an incoming target hydroxyl side chain. Its function is as follows. Protein that can both mediate the addition of adenosine 5'-monophosphate (AMP) to specific residues of target proteins (AMPylation), and the removal of the same modification from target proteins (de-AMPylation), depending on the context. The side chain of Glu-261 determines which of the two opposing activities (AMPylase or de-AMPylase) will take place. Acts as a key regulator of the unfolded protein response (UPR) by mediating AMPylation or de-AMPylation of Hsc70-3/BiP. In unstressed cells, acts as an adenylyltransferase by mediating AMPylation of Hsc70-3/BiP at 'Thr-518', thereby inactivating it. In response to endoplasmic reticulum stress, acts as a phosphodiesterase by mediating removal of ATP (de-AMPylation) from Hsc70-3/BiP at 'Thr-518', leading to restore HSPA5/BiP activity. This Drosophila persimilis (Fruit fly) protein is Protein adenylyltransferase Fic.